A 227-amino-acid polypeptide reads, in one-letter code: Peroxisomal membrane protein 11B (227 aa).

Residues Met-1 to Arg-85 lie on the Cytoplasmic side of the membrane. A helical membrane pass occupies residues Phe-86–Trp-106. At Leu-107–Pro-201 the chain is on the lumenal side. A helical transmembrane segment spans residues Phe-202–Tyr-222. The Cytoplasmic portion of the chain corresponds to Arg-223–Ser-227.

Belongs to the peroxin-11 family. Homooligomer. Interacts with ARC5 and FIS1B on peroxisomes. As to expression, expressed in roots, leaves and developing siliques.

The protein localises to the peroxisome membrane. Its function is as follows. Involved in peroxisomal proliferation. Promotes peroxisomal duplication, aggregation or elongation without fission. The polypeptide is Peroxisomal membrane protein 11B (PEX11B) (Arabidopsis thaliana (Mouse-ear cress)).